Consider the following 300-residue polypeptide: UDP-N-acetylenolpyruvoylglucosamine reductase (300 aa).

Positions 30–194 (RVGGPADFFV…IGATFVLDSD (165 aa)) constitute an FAD-binding PCMH-type domain. Residue Arg-174 is part of the active site. Catalysis depends on Ser-223, which acts as the Proton donor. Glu-293 is a catalytic residue.

The protein belongs to the MurB family. The cofactor is FAD.

The protein localises to the cytoplasm. It carries out the reaction UDP-N-acetyl-alpha-D-muramate + NADP(+) = UDP-N-acetyl-3-O-(1-carboxyvinyl)-alpha-D-glucosamine + NADPH + H(+). The protein operates within cell wall biogenesis; peptidoglycan biosynthesis. Functionally, cell wall formation. The chain is UDP-N-acetylenolpyruvoylglucosamine reductase from Geobacter sulfurreducens (strain ATCC 51573 / DSM 12127 / PCA).